Here is a 60-residue protein sequence, read N- to C-terminus: Cytotoxin SP15c (60 aa).

Disulfide bonds link C3–C21, C14–C38, C42–C53, and C54–C59.

This sequence belongs to the three-finger toxin family. Short-chain subfamily. Type IA cytotoxin sub-subfamily. Monomer in solution; Homodimer and oligomer in the presence of negatively charged lipids forming a pore with a size ranging between 20 and 30 Angstroms. Expressed by the venom gland.

It is found in the secreted. The protein resides in the target cell membrane. Its function is as follows. Shows cytolytic activity on many different cells by forming pore in lipid membranes. In vivo, increases heart rate or kills the animal by cardiac arrest. In addition, it binds to heparin with high affinity, interacts with Kv channel-interacting protein 1 (KCNIP1) in a calcium-independent manner, and binds to integrin alpha-V/beta-3 (ITGAV/ITGB3) with moderate affinity. The protein is Cytotoxin SP15c of Naja atra (Chinese cobra).